The following is a 441-amino-acid chain: MRGLEESGPRPTATPCGCVKPALETGNLLTEPVGYLESCFSAKNGTPRQPSICSYSRACLRIRKRIFNNPEHSLMGLEQFSHVWILFVFHKNGHLSCKAKVQPPRLNGAKTGVFSTRSPHRPNAIGLTLAKLEKVEGGAIYLSGIDMIHGTPVLDIKPYIAEYDSPQNVMEPLADFNLQNNQHTPNTVSQSDSKTDSCDQRQLSGCDEPQPHHSTKRKPKCPEDRTSEENYLTHSDTARIQQAFPMHREIAVDFGLESRRDQSSSVAEEQIGPYCPEKSFSEKGTDKKLERVEGAAVLQGSRAETQPMAPHCPAGRADGAPRSVVPAWVTEAPVATLEVRFTPHAEMDLGQLSSQDVGQASFKYFQSAEEAKRAIEAVLSADPRSVYRRKLCQDRLFYFTVDIAHVTCWFGDGFAEVLRIKPASEPVHMTGPVGSLVSLGS.

In terms of domain architecture, TsaA-like spans 30-168; it reads TEPVGYLESC…YIAEYDSPQN (139 aa). S-adenosyl-L-methionine-binding positions include 47–49, 90–91, R117, L127, and 148–151; these read PRQ, HK, and IHGT. Over residues 179–192 the composition is skewed to polar residues; sequence QNNQHTPNTVSQSD. 2 disordered regions span residues 179–231 and 264–284; these read QNNQ…EENY and SSVA…SEKG.

It belongs to the tRNA methyltransferase O family.

It carries out the reaction N(6)-L-threonylcarbamoyladenosine(37) in tRNA + S-adenosyl-L-methionine = N(6)-methyl,N(6)-L-threonylcarbamoyladenosine(37) in tRNA + S-adenosyl-L-homocysteine + H(+). Its function is as follows. S-adenosyl-L-methionine-dependent methyltransferase responsible for the addition of the methyl group in the formation of N6-methyl-N6-threonylcarbamoyladenosine at position 37 (m(6)t(6)A37) of the tRNA anticodon loop of tRNA(Ser)(GCU). The methyl group of m(6)t(6)A37 may improve the efficiency of the tRNA decoding ability. The chain is tRNA (adenine(37)-N6)-methyltransferase from Homo sapiens (Human).